The chain runs to 152 residues: Large ribosomal subunit protein uL15 (152 aa).

The disordered stretch occupies residues 1-57 (MTSTLNTLKSNSGSRKKKLRKGRGIAAGQGASCGFGMRGQKSRSGRPTRPGFEGGQM). Residues 14–23 (SRKKKLRKGR) show a composition bias toward basic residues. Gly residues predominate over residues 25–37 (IAAGQGASCGFGM).

Belongs to the universal ribosomal protein uL15 family. In terms of assembly, part of the 50S ribosomal subunit.

Its function is as follows. Binds to the 23S rRNA. This Prochlorococcus marinus (strain MIT 9215) protein is Large ribosomal subunit protein uL15.